Reading from the N-terminus, the 515-residue chain is 1-pyrroline-5-carboxylate dehydrogenase 1 (515 aa).

Active-site residues include Glu-286 and Cys-320.

This sequence belongs to the aldehyde dehydrogenase family. RocA subfamily.

It carries out the reaction L-glutamate 5-semialdehyde + NAD(+) + H2O = L-glutamate + NADH + 2 H(+). It functions in the pathway amino-acid degradation; L-proline degradation into L-glutamate; L-glutamate from L-proline: step 2/2. In Halalkalibacterium halodurans (strain ATCC BAA-125 / DSM 18197 / FERM 7344 / JCM 9153 / C-125) (Bacillus halodurans), this protein is 1-pyrroline-5-carboxylate dehydrogenase 1 (rocA1).